A 426-amino-acid polypeptide reads, in one-letter code: Phosphomethylpyrimidine synthase (426 aa).

Residues Asn65, Met94, Tyr123, His162, 184-186 (SRG), 225-228 (DGLR), and Glu264 each bind substrate. His268 is a binding site for Zn(2+). Tyr291 serves as a coordination point for substrate. His332 is a binding site for Zn(2+). Residues Cys409, Cys412, and Cys416 each contribute to the [4Fe-4S] cluster site.

The protein belongs to the ThiC family. The cofactor is [4Fe-4S] cluster.

It catalyses the reaction 5-amino-1-(5-phospho-beta-D-ribosyl)imidazole + S-adenosyl-L-methionine = 4-amino-2-methyl-5-(phosphooxymethyl)pyrimidine + CO + 5'-deoxyadenosine + formate + L-methionine + 3 H(+). Its pathway is cofactor biosynthesis; thiamine diphosphate biosynthesis. In terms of biological role, catalyzes the synthesis of the hydroxymethylpyrimidine phosphate (HMP-P) moiety of thiamine from aminoimidazole ribotide (AIR) in a radical S-adenosyl-L-methionine (SAM)-dependent reaction. The sequence is that of Phosphomethylpyrimidine synthase from Thermodesulfovibrio yellowstonii (strain ATCC 51303 / DSM 11347 / YP87).